The primary structure comprises 204 residues: Partner of Y14 and mago (204 aa).

Disordered regions lie at residues 1–121 (MGSR…QSVN) and 133–153 (SSNNDVCGGAPNPGTTGEDVE). Residues 7 to 36 (EQGKRMAELSKNLKEGERILEPTRRPDGTL) show a composition bias toward basic and acidic residues. The span at 104 to 121 (KANSSEDGSASNGSQSVN) shows a compositional bias: polar residues. The Nuclear export signal motif lies at 195-200 (ELKALE).

Belongs to the pym family. Interacts with MAGO and Y14. Expressed in root and shoot meristems, cotyledons, vascular tissues of leaves, receptacle of flowers and siliques, and pollen grains.

It localises to the cytoplasm. The protein resides in the nucleus. It is found in the nucleolus. Its subcellular location is the nucleoplasm. Key regulator of the exon junction complex (EJC), a multiprotein complex that associates immediately upstream of the exon-exon junction on mRNAs and serves as a positional landmark for the intron exon structure of genes and directs post-transcriptional processes in the cytoplasm such as mRNA export, nonsense-mediated mRNA decay (NMD) or translation. Acts as an EJC disassembly factor, allowing translation-dependent EJC removal and recycling by disrupting mature EJC from spliced mRNAs. Can increase in vitro the expression from reporter constructs that contain leader introns required for the expression of different genes. In association with MAGO and PYM, participates in intron-mediated enhancement of gene expression. This is Partner of Y14 and mago from Arabidopsis thaliana (Mouse-ear cress).